A 156-amino-acid chain; its full sequence is MIP18 family protein galla-2 (156 aa).

Belongs to the MIP18 family. Component of the CGX complex composed of crb, galla (galla-1 or galla-2) and Xpd. Interacts with crb (via intracellular domain). Also able to interact with Xpd in the absence of crb. Interacts with Mms19.

Component of the crb-galla-Xpd (CGX) complex which is essential for proper mitotic chromosome segregation in early embryos. The CGX complex is also required for cell proliferation in developing wing disks. In the CGX complex, acts with crb to recruit Xpd thus forming the functional complex. This Drosophila melanogaster (Fruit fly) protein is MIP18 family protein galla-2.